The chain runs to 540 residues: Chaperonin GroEL (540 aa).

ATP is bound by residues 29–32 (TLGP), 86–90 (DGTTT), Gly413, 476–478 (NAA), and Asp492.

The protein belongs to the chaperonin (HSP60) family. As to quaternary structure, forms a cylinder of 14 subunits composed of two heptameric rings stacked back-to-back. Interacts with the co-chaperonin GroES.

The protein resides in the cytoplasm. The catalysed reaction is ATP + H2O + a folded polypeptide = ADP + phosphate + an unfolded polypeptide.. In terms of biological role, together with its co-chaperonin GroES, plays an essential role in assisting protein folding. The GroEL-GroES system forms a nano-cage that allows encapsulation of the non-native substrate proteins and provides a physical environment optimized to promote and accelerate protein folding. The protein is Chaperonin GroEL of Streptococcus constellatus.